A 346-amino-acid chain; its full sequence is Elongation factor Ts (346 aa).

Residues 80–83 (TDFV) form an involved in Mg(2+) ion dislocation from EF-Tu region.

Belongs to the EF-Ts family.

It is found in the cytoplasm. In terms of biological role, associates with the EF-Tu.GDP complex and induces the exchange of GDP to GTP. It remains bound to the aminoacyl-tRNA.EF-Tu.GTP complex up to the GTP hydrolysis stage on the ribosome. The sequence is that of Elongation factor Ts from Streptococcus agalactiae serotype Ia (strain ATCC 27591 / A909 / CDC SS700).